A 900-amino-acid polypeptide reads, in one-letter code: Alanine--tRNA ligase (900 aa).

4 residues coordinate Zn(2+): H604, H608, C708, and H712.

Belongs to the class-II aminoacyl-tRNA synthetase family. It depends on Zn(2+) as a cofactor.

It localises to the cytoplasm. It catalyses the reaction tRNA(Ala) + L-alanine + ATP = L-alanyl-tRNA(Ala) + AMP + diphosphate. Functionally, catalyzes the attachment of alanine to tRNA(Ala) in a two-step reaction: alanine is first activated by ATP to form Ala-AMP and then transferred to the acceptor end of tRNA(Ala). Also edits incorrectly charged Ser-tRNA(Ala) and Gly-tRNA(Ala) via its editing domain. This is Alanine--tRNA ligase from Saccharolobus islandicus (strain M.14.25 / Kamchatka #1) (Sulfolobus islandicus).